Here is a 117-residue protein sequence, read N- to C-terminus: UPF0342 protein LBUL_1430 (117 aa).

Belongs to the UPF0342 family.

This Lactobacillus delbrueckii subsp. bulgaricus (strain ATCC BAA-365 / Lb-18) protein is UPF0342 protein LBUL_1430.